Here is a 199-residue protein sequence, read N- to C-terminus: Imidazole glycerol phosphate synthase subunit HisH (199 aa).

In terms of domain architecture, Glutamine amidotransferase type-1 spans 3–199; sequence NITIIDTGCA…LKNFVEKVPF (197 aa). Residue Cys78 is the Nucleophile of the active site. Residues His178 and Glu180 contribute to the active site.

As to quaternary structure, heterodimer of HisH and HisF.

It is found in the cytoplasm. It catalyses the reaction 5-[(5-phospho-1-deoxy-D-ribulos-1-ylimino)methylamino]-1-(5-phospho-beta-D-ribosyl)imidazole-4-carboxamide + L-glutamine = D-erythro-1-(imidazol-4-yl)glycerol 3-phosphate + 5-amino-1-(5-phospho-beta-D-ribosyl)imidazole-4-carboxamide + L-glutamate + H(+). The enzyme catalyses L-glutamine + H2O = L-glutamate + NH4(+). Its pathway is amino-acid biosynthesis; L-histidine biosynthesis; L-histidine from 5-phospho-alpha-D-ribose 1-diphosphate: step 5/9. Its function is as follows. IGPS catalyzes the conversion of PRFAR and glutamine to IGP, AICAR and glutamate. The HisH subunit catalyzes the hydrolysis of glutamine to glutamate and ammonia as part of the synthesis of IGP and AICAR. The resulting ammonia molecule is channeled to the active site of HisF. In Haemophilus influenzae (strain 86-028NP), this protein is Imidazole glycerol phosphate synthase subunit HisH.